Consider the following 430-residue polypeptide: Adenylosuccinate synthetase (430 aa).

Residues glycine 12 to lysine 18 and glycine 40 to threonine 42 contribute to the GTP site. The active-site Proton acceptor is aspartate 13. The Mg(2+) site is built by aspartate 13 and glycine 40. Residues aspartate 13–lysine 16, asparagine 38–histidine 41, threonine 129, arginine 143, glutamine 223, threonine 238, and arginine 302 contribute to the IMP site. The Proton donor role is filled by histidine 41. Threonine 298–arginine 304 serves as a coordination point for substrate. GTP-binding positions include arginine 304, lysine 330–aspartate 332, and serine 412–glycine 414.

The protein belongs to the adenylosuccinate synthetase family. Homodimer. Mg(2+) is required as a cofactor.

The protein localises to the cytoplasm. It carries out the reaction IMP + L-aspartate + GTP = N(6)-(1,2-dicarboxyethyl)-AMP + GDP + phosphate + 2 H(+). It functions in the pathway purine metabolism; AMP biosynthesis via de novo pathway; AMP from IMP: step 1/2. In terms of biological role, plays an important role in the de novo pathway of purine nucleotide biosynthesis. Catalyzes the first committed step in the biosynthesis of AMP from IMP. This chain is Adenylosuccinate synthetase, found in Desulforudis audaxviator (strain MP104C).